The primary structure comprises 303 residues: Aspartate carbamoyltransferase catalytic subunit (303 aa).

R51 and T52 together coordinate carbamoyl phosphate. K80 serves as a coordination point for L-aspartate. 3 residues coordinate carbamoyl phosphate: R101, H129, and Q132. Residues R162 and R221 each contribute to the L-aspartate site. Carbamoyl phosphate-binding residues include L260 and P261.

It belongs to the aspartate/ornithine carbamoyltransferase superfamily. ATCase family. In terms of assembly, heterooligomer of catalytic and regulatory chains.

It carries out the reaction carbamoyl phosphate + L-aspartate = N-carbamoyl-L-aspartate + phosphate + H(+). It functions in the pathway pyrimidine metabolism; UMP biosynthesis via de novo pathway; (S)-dihydroorotate from bicarbonate: step 2/3. In terms of biological role, catalyzes the condensation of carbamoyl phosphate and aspartate to form carbamoyl aspartate and inorganic phosphate, the committed step in the de novo pyrimidine nucleotide biosynthesis pathway. This Saccharolobus islandicus (strain Y.N.15.51 / Yellowstone #2) (Sulfolobus islandicus) protein is Aspartate carbamoyltransferase catalytic subunit.